The sequence spans 265 residues: Uridylate kinase (265 aa).

A disordered region spans residues 1–29; sequence MTESREPHVAGSAAPRPEPANGLASGQPS. 40-43 is a binding site for ATP; it reads KLGG. G81 is a binding site for UMP. The ATP site is built by G82 and R86. Residues D101 and 162 to 169 contribute to the UMP site; that span reads MGLPYFST. 2 residues coordinate ATP: F195 and D198.

The protein belongs to the UMP kinase family. As to quaternary structure, homohexamer.

Its subcellular location is the cytoplasm. The enzyme catalyses UMP + ATP = UDP + ADP. It functions in the pathway pyrimidine metabolism; CTP biosynthesis via de novo pathway; UDP from UMP (UMPK route): step 1/1. Inhibited by UTP. In terms of biological role, catalyzes the reversible phosphorylation of UMP to UDP. In Mycobacterium avium (strain 104), this protein is Uridylate kinase.